Consider the following 295-residue polypeptide: Universal stress protein Mb2028c (295 aa).

ATP-binding positions include Gly13, 117–123, 131–132, Gly165, Asp198, 262–268, and 276–278; these read GSSGRGA, SV, GSHGRGG, and SVS.

The protein belongs to the universal stress protein A family.

In Mycobacterium bovis (strain ATCC BAA-935 / AF2122/97), this protein is Universal stress protein Mb2028c.